An 863-amino-acid polypeptide reads, in one-letter code: Probable beta-glucosidase A (863 aa).

The first 19 residues, 1–19 (MKLGWLEAAALTAASVASA), serve as a signal peptide directing secretion. N-linked (GlcNAc...) asparagine glycans are attached at residues Asn65, Asn214, and Asn255. The active site involves Asp283. Asn318, Asn325, Asn357, Asn493, Asn526, Asn545, Asn567, Asn664, and Asn715 each carry an N-linked (GlcNAc...) asparagine glycan. Residues 720 to 754 (KESSGDPNYGWDDEDYIPEGAKDGSPQDVLPSGGG) are disordered.

This sequence belongs to the glycosyl hydrolase 3 family.

The protein resides in the secreted. It catalyses the reaction Hydrolysis of terminal, non-reducing beta-D-glucosyl residues with release of beta-D-glucose.. It functions in the pathway glycan metabolism; cellulose degradation. Beta-glucosidases are one of a number of cellulolytic enzymes involved in the degradation of cellulosic biomass. Catalyzes the last step releasing glucose from the inhibitory cellobiose. The sequence is that of Probable beta-glucosidase A (bglA) from Emericella nidulans (strain FGSC A4 / ATCC 38163 / CBS 112.46 / NRRL 194 / M139) (Aspergillus nidulans).